The sequence spans 942 residues: Lambda-carrageenase (942 aa).

The signal sequence occupies residues 1–25; sequence MKIKILSAMVASSLLIGCVIPTVKA.

In terms of assembly, monomer.

It is found in the secreted. The catalysed reaction is Endohydrolysis of (1-&gt;4)-beta-linkages in the backbone of lambda-carrageenan, resulting in the tetrasaccharide alpha-D-Galp2,6S2-(1-&gt;3)-beta-D-Galp2S-(1-&gt;4)-alpha-D-Galp2,6S2-(1-&gt;3)-D-Galp2S.. In terms of biological role, hydrolyzes lambda-carrageenan with inversion of anomeric configuration. Does not hydrolyze iota- and kappa-carrageenans, agarose or porphyran. This Pseudoalteromonas carrageenovora (Alteromonas carrageenovora) protein is Lambda-carrageenase.